A 338-amino-acid chain; its full sequence is Glyceraldehyde-3-phosphate dehydrogenase (338 aa).

NAD(+) is bound by residues 12–13 (RI), D38, and S125. D-glyceraldehyde 3-phosphate-binding positions include 155–157 (SCT), T186, 216–217 (TG), and R239. Residue C156 is the Nucleophile of the active site. Residue N320 coordinates NAD(+).

The protein belongs to the glyceraldehyde-3-phosphate dehydrogenase family. As to quaternary structure, homotetramer.

Its subcellular location is the cytoplasm. It carries out the reaction D-glyceraldehyde 3-phosphate + phosphate + NAD(+) = (2R)-3-phospho-glyceroyl phosphate + NADH + H(+). It functions in the pathway carbohydrate degradation; glycolysis; pyruvate from D-glyceraldehyde 3-phosphate: step 1/5. Catalyzes the oxidative phosphorylation of glyceraldehyde 3-phosphate (G3P) to 1,3-bisphosphoglycerate (BPG) using the cofactor NAD. The first reaction step involves the formation of a hemiacetal intermediate between G3P and a cysteine residue, and this hemiacetal intermediate is then oxidized to a thioester, with concomitant reduction of NAD to NADH. The reduced NADH is then exchanged with the second NAD, and the thioester is attacked by a nucleophilic inorganic phosphate to produce BPG. In Lactobacillus delbrueckii subsp. bulgaricus, this protein is Glyceraldehyde-3-phosphate dehydrogenase (gap).